The primary structure comprises 344 residues: N-acetyl-gamma-glutamyl-phosphate reductase (344 aa).

The active site involves cysteine 148.

Belongs to the NAGSA dehydrogenase family. Type 1 subfamily.

It is found in the cytoplasm. It catalyses the reaction N-acetyl-L-glutamate 5-semialdehyde + phosphate + NADP(+) = N-acetyl-L-glutamyl 5-phosphate + NADPH + H(+). It functions in the pathway amino-acid biosynthesis; L-arginine biosynthesis; N(2)-acetyl-L-ornithine from L-glutamate: step 3/4. Catalyzes the NADPH-dependent reduction of N-acetyl-5-glutamyl phosphate to yield N-acetyl-L-glutamate 5-semialdehyde. This is N-acetyl-gamma-glutamyl-phosphate reductase from Geobacillus thermodenitrificans (strain NG80-2).